The primary structure comprises 1122 residues: Telomerase reverse transcriptase (1122 aa).

The interval 1–239 (MTRAPRCPAV…TKRHLSLTST (239 aa)) is RNA-interacting domain 1. A GQ motif region spans residues 58-205 (MHWGSQPPPA…RPVGRNFTNL (148 aa)). Residues 137 to 141 (WMLLL) are required for regulating specificity for telomeric DNA and for processivity for primer elongation. The interval 213 to 296 (SSSRQEAPKP…KDLSSKGKVS (84 aa)) is disordered. Residues 240–328 (SVPSAKKARC…PRQNAFQLRP (89 aa)) are linker. Positions 284-295 (TAEKDLSSKGKV) are enriched in basic and acidic residues. A required for oligomerization region spans residues 306 to 528 (CKHKPSSTSL…VPAAEHRLRE (223 aa)). Positions 329–540 (FIETRHFLYS…LATFLFWLMD (212 aa)) are RNA-interacting domain 2. The short motif at 332-337 (TRHFLY) is the TFLY; involved in RNA binding element. The QFP motif stretch occupies residues 381-511 (LCRTHRLSRR…MKVEDCHWLR (131 aa)). Residues 402-422 (LVNHAECQYVRLLRSHCRFRT) are CP motif. S447 bears the Phosphoserine; by DYRK2 mark. The Reverse transcriptase domain occupies 595–928 (EVRHHQDTWL…CLFPWCGLLL (334 aa)). Phosphotyrosine; by SRC-type Tyr-kinases is present on Y697. 3 residues coordinate Mg(2+): D702, D861, and D862. The tract at residues 907-921 (LGGAAPYQLPAHCLF) is required for oligomerization. Positions 923-927 (WCGLL) are primer grip sequence. The segment at 929 to 1122 (DTQTLEVFCD…LSTDFQTILD (194 aa)) is CTE.

Belongs to the reverse transcriptase family. Telomerase subfamily. As to quaternary structure, catalytic component of the telomerase holoenzyme complex composed of one molecule of TERT, one molecule of WRAP53/TCAB1, two molecules of H/ACA ribonucleoprotein complex subunits DKC1, NOP10, NHP2 and GAR1, and a telomerase RNA template component (TERC). The telomerase holoenzyme complex is associated with TEP1, SMG6/EST1A and POT1. The molecular chaperone HSP90/P23 complex is required for correct assembly and stabilization of the active telomerase. Interacts directly with HSP90A and PTGES3. Interacts with HSPA1A; the interaction occurs in the absence of TERC and dissociates once the complex has formed. Interacts with RAN; the interaction promotes nuclear export of TERT. Interacts with XPO1. Interacts with PTPN11; the interaction retains TERT in the nucleus. Interacts with NCL (via RRM1 and C-terminal RRM4/Arg/Gly-rich domains); the interaction is important for nucleolar localization of TERT. Interacts with SMARCA4 (via the bromodomain); the interaction regulates Wnt-mediated signaling. Interacts with MCRS1 (isoform MCRS2); the interaction inhibits in vitro telomerase activity. Interacts with PIF1; the interaction has no effect on the elongation activity of TERT. Interacts with PML; the interaction recruits TERT to PML bodies and inhibits telomerase activity. Interacts with GNL3L. Interacts with isoform 1 and isoform 2 of NVL. Interacts with DHX36. Interacts with ATF7. Phosphorylation at Tyr-697 under oxidative stress leads to translocation of TERT to the cytoplasm and reduces its antiapoptotic activity. Dephosphorylated by SHP2/PTPN11 leading to nuclear retention. Phosphorylation by the AKT pathway promotes nuclear location. Phosphorylation at the G2/M phase at Ser-447 by DYRK2 promotes ubiquitination by the EDVP complex and degradation. Post-translationally, ubiquitinated by the EDVP complex, a E3 ligase complex following phosphorylation at Ser-447 by DYRK2. Ubiquitinated leads to proteasomal degradation. In terms of tissue distribution, high activity in intestine, liver and testis, moderate in lung, very low in muscle, heart and brain.

Its subcellular location is the nucleus. It is found in the nucleolus. The protein resides in the nucleoplasm. It localises to the chromosome. The protein localises to the telomere. Its subcellular location is the cytoplasm. It is found in the PML body. It catalyses the reaction DNA(n) + a 2'-deoxyribonucleoside 5'-triphosphate = DNA(n+1) + diphosphate. Telomerase is a ribonucleoprotein enzyme essential for the replication of chromosome termini in most eukaryotes. Active in progenitor and cancer cells. Inactive, or very low activity, in normal somatic cells. Catalytic component of the teleromerase holoenzyme complex whose main activity is the elongation of telomeres by acting as a reverse transcriptase that adds simple sequence repeats to chromosome ends by copying a template sequence within the RNA component of the enzyme. Catalyzes the RNA-dependent extension of 3'-chromosomal termini with the 6-nucleotide telomeric repeat unit, 5'-TTAGGG-3'. The catalytic cycle involves primer binding, primer extension and release of product once the template boundary has been reached or nascent product translocation followed by further extension. More active on substrates containing 2 or 3 telomeric repeats. Telomerase activity is regulated by a number of factors including telomerase complex-associated proteins, chaperones and polypeptide modifiers. Modulates Wnt signaling. Plays important roles in aging and antiapoptosis. The polypeptide is Telomerase reverse transcriptase (Tert) (Mus musculus (Mouse)).